The chain runs to 291 residues: MTDSFPFSVQESVPLSRFSTFRIGGPARYFKELTSLSEALTVFSYLHTHPLPYIIIGKGSNCLFDDQGFDGLVLYNNIQGQEFLSDTQIKVLSGSSFALLGKRLSSQGFSGLEFAVGIPGTVGGAVFMNAGTTLANTASSLINVEIIDHSGILLSIPREKLLFSYRTSPFQKKPAFIASATFQLTKDPQAAKRAKALIEERILKQPYEYPSAGCIFRNPEGLSAGALIDRAGLKGLKIGGGQISEKHGNFIINTGNACTADILELIEIIQKTLKKQGISLHKEVRIIPFRL.

Residues 22–187 form the FAD-binding PCMH-type domain; the sequence is RIGGPARYFK…ASATFQLTKD (166 aa). The active site involves Arg166. The Proton donor role is filled by Cys214. The active site involves Glu283.

Belongs to the MurB family. FAD serves as cofactor.

The protein localises to the cytoplasm. It catalyses the reaction UDP-N-acetyl-alpha-D-muramate + NADP(+) = UDP-N-acetyl-3-O-(1-carboxyvinyl)-alpha-D-glucosamine + NADPH + H(+). It participates in cell wall biogenesis; peptidoglycan biosynthesis. Its function is as follows. Cell wall formation. The sequence is that of UDP-N-acetylenolpyruvoylglucosamine reductase from Chlamydia trachomatis serovar L2 (strain ATCC VR-902B / DSM 19102 / 434/Bu).